A 283-amino-acid polypeptide reads, in one-letter code: Formamidopyrimidine-DNA glycosylase (283 aa).

P2 functions as the Schiff-base intermediate with DNA in the catalytic mechanism. The active-site Proton donor is E3. K58 (proton donor; for beta-elimination activity) is an active-site residue. DNA is bound by residues H100, R119, and R162. Residues 247-283 (DVYGREGEPCRRAGCDGTVQRITQSGRSSFYCAQCQR) form an FPG-type zinc finger. R273 acts as the Proton donor; for delta-elimination activity in catalysis.

This sequence belongs to the FPG family. In terms of assembly, monomer. Zn(2+) is required as a cofactor.

The enzyme catalyses Hydrolysis of DNA containing ring-opened 7-methylguanine residues, releasing 2,6-diamino-4-hydroxy-5-(N-methyl)formamidopyrimidine.. The catalysed reaction is 2'-deoxyribonucleotide-(2'-deoxyribose 5'-phosphate)-2'-deoxyribonucleotide-DNA = a 3'-end 2'-deoxyribonucleotide-(2,3-dehydro-2,3-deoxyribose 5'-phosphate)-DNA + a 5'-end 5'-phospho-2'-deoxyribonucleoside-DNA + H(+). In terms of biological role, involved in base excision repair of DNA damaged by oxidation or by mutagenic agents. Acts as a DNA glycosylase that recognizes and removes damaged bases. Has a preference for oxidized purines, such as 7,8-dihydro-8-oxoguanine (8-oxoG). Has AP (apurinic/apyrimidinic) lyase activity and introduces nicks in the DNA strand. Cleaves the DNA backbone by beta-delta elimination to generate a single-strand break at the site of the removed base with both 3'- and 5'-phosphates. This Ruegeria pomeroyi (strain ATCC 700808 / DSM 15171 / DSS-3) (Silicibacter pomeroyi) protein is Formamidopyrimidine-DNA glycosylase.